The following is a 142-amino-acid chain: Hemoglobin subunit alpha (142 aa).

The Globin domain occupies 2–142 (VLSADDKANI…VSTVLTSKYR (141 aa)). A Phosphoserine modification is found at Ser4. N6-succinyllysine is present on residues Lys8 and Lys12. Residue Lys17 is modified to N6-acetyllysine; alternate. Lys17 carries the N6-succinyllysine; alternate modification. A Phosphotyrosine modification is found at Tyr25. A Phosphoserine modification is found at Ser36. An N6-succinyllysine modification is found at Lys41. Ser50 carries the phosphoserine modification. Position 59 (His59) interacts with O2. His88 serves as a coordination point for heme b. Position 109 is a phosphothreonine (Thr109). A phosphoserine mark is found at Ser125 and Ser132. A phosphothreonine mark is found at Thr135 and Thr138. Phosphoserine is present on Ser139.

It belongs to the globin family. Heterotetramer of two alpha chains and two beta chains. In terms of tissue distribution, red blood cells.

In terms of biological role, involved in oxygen transport from the lung to the various peripheral tissues. Its function is as follows. Hemopressin acts as an antagonist peptide of the cannabinoid receptor CNR1. Hemopressin-binding efficiently blocks cannabinoid receptor CNR1 and subsequent signaling. This is Hemoglobin subunit alpha (HBA) from Cricetomys gambianus (Northern giant pouched rat).